The chain runs to 341 residues: Ketol-acid reductoisomerase (NADP(+)) (341 aa).

A KARI N-terminal Rossmann domain is found at 1–182; the sequence is MTELFYDDDA…GGTRAGVIKT (182 aa). NADP(+) is bound by residues 25-28, Ser-51, Ser-53, and 83-86; these read YGSQ and DQVQ. The active site involves His-108. Position 134 (Gly-134) interacts with NADP(+). One can recognise a KARI C-terminal knotted domain in the interval 183 to 328; that stretch reads TFTEETETDL…RELRKLFSWI (146 aa). Residues Asp-191, Glu-195, Glu-227, and Glu-231 each contribute to the Mg(2+) site. Ser-252 contacts substrate.

Belongs to the ketol-acid reductoisomerase family. Mg(2+) serves as cofactor.

The catalysed reaction is (2R)-2,3-dihydroxy-3-methylbutanoate + NADP(+) = (2S)-2-acetolactate + NADPH + H(+). The enzyme catalyses (2R,3R)-2,3-dihydroxy-3-methylpentanoate + NADP(+) = (S)-2-ethyl-2-hydroxy-3-oxobutanoate + NADPH + H(+). It participates in amino-acid biosynthesis; L-isoleucine biosynthesis; L-isoleucine from 2-oxobutanoate: step 2/4. Its pathway is amino-acid biosynthesis; L-valine biosynthesis; L-valine from pyruvate: step 2/4. Involved in the biosynthesis of branched-chain amino acids (BCAA). Catalyzes an alkyl-migration followed by a ketol-acid reduction of (S)-2-acetolactate (S2AL) to yield (R)-2,3-dihydroxy-isovalerate. In the isomerase reaction, S2AL is rearranged via a Mg-dependent methyl migration to produce 3-hydroxy-3-methyl-2-ketobutyrate (HMKB). In the reductase reaction, this 2-ketoacid undergoes a metal-dependent reduction by NADPH to yield (R)-2,3-dihydroxy-isovalerate. The protein is Ketol-acid reductoisomerase (NADP(+)) of Renibacterium salmoninarum (strain ATCC 33209 / DSM 20767 / JCM 11484 / NBRC 15589 / NCIMB 2235).